A 244-amino-acid chain; its full sequence is Phosphoadenosine 5'-phosphosulfate reductase (244 aa).

Catalysis depends on Cys-239, which acts as the Nucleophile; cysteine thiosulfonate intermediate.

Belongs to the PAPS reductase family. CysH subfamily.

The protein resides in the cytoplasm. The catalysed reaction is [thioredoxin]-disulfide + sulfite + adenosine 3',5'-bisphosphate + 2 H(+) = [thioredoxin]-dithiol + 3'-phosphoadenylyl sulfate. The protein operates within sulfur metabolism; hydrogen sulfide biosynthesis; sulfite from sulfate: step 3/3. Catalyzes the formation of sulfite from phosphoadenosine 5'-phosphosulfate (PAPS) using thioredoxin as an electron donor. The sequence is that of Phosphoadenosine 5'-phosphosulfate reductase from Sodalis glossinidius (strain morsitans).